A 370-amino-acid polypeptide reads, in one-letter code: MTVRSLFLLPGDGIGPEAMTEVRKLIEYMNSAHNAGFTVSEGLVGGSAYDAHGVAISDADMEKALAADAILFGAVGGPKWDGVPYEHRPEAGLLRLRKDLELFANLRPAICYPALAAASSLKPELVEGLDILIVRELTGGVYFGEPKQIIDLGNGQKRGIDTQIYDTFEIERIASVAFELARSRDNRVCSMEKRNVMKSGVLWNQVVTETHAAKYKDVQLEHMLADAGGMQLVRKPKQFDVIVTDNLFGDMLSDVAAMLTGSLGMLPSASLGAPDAKTGKRKAMYEPVHGSAPDIAGKSIANPIAMIASFAMCLRYSFNMVDEATKLEAAIANVLDKGIRTADIMADGCRQVGTSDMGDAVLAEFKALSA.

77–90 (GPKWDGVPYEHRPE) is an NAD(+) binding site. 4 residues coordinate substrate: Arg-97, Arg-107, Arg-135, and Asp-226. The Mg(2+) site is built by Asp-226, Asp-250, and Asp-254. Residue 290–302 (GSAPDIAGKSIAN) coordinates NAD(+).

Belongs to the isocitrate and isopropylmalate dehydrogenases family. LeuB type 1 subfamily. Homodimer. Mg(2+) is required as a cofactor. Mn(2+) serves as cofactor.

It is found in the cytoplasm. The enzyme catalyses (2R,3S)-3-isopropylmalate + NAD(+) = 4-methyl-2-oxopentanoate + CO2 + NADH. The protein operates within amino-acid biosynthesis; L-leucine biosynthesis; L-leucine from 3-methyl-2-oxobutanoate: step 3/4. Catalyzes the oxidation of 3-carboxy-2-hydroxy-4-methylpentanoate (3-isopropylmalate) to 3-carboxy-4-methyl-2-oxopentanoate. The product decarboxylates to 4-methyl-2 oxopentanoate. The polypeptide is 3-isopropylmalate dehydrogenase (leuB) (Agrobacterium fabrum (strain C58 / ATCC 33970) (Agrobacterium tumefaciens (strain C58))).